A 442-amino-acid chain; its full sequence is Septin-8 (442 aa).

Residues 1-16 show a composition bias toward basic and acidic residues; it reads MAATDLERISNAEPEP. Residues 1–21 are disordered; it reads MAATDLERISNAEPEPRSLSL. Ala-2 carries the N-acetylalanine modification. Position 10 is a phosphoserine (Ser-10). A Septin-type G domain is found at 41-307; it reads QGFSFNILCV…ELYRRCKLEE (267 aa). The G1 motif stretch occupies residues 51–58; it reads GETGIGKS. GTP is bound by residues 51 to 58, Gly-106, 187 to 195, Gly-241, and Arg-256; these read GETGIGKS and KADTISKSE. A G3 motif region spans residues 103–106; the sequence is DAVG. Residues 186–189 are G4 motif; the sequence is AKAD. Positions 322–407 form a coiled coil; the sequence is LQETYEAKRK…FNCRKAAMEA (86 aa). Residues 411–420 show a composition bias toward polar residues; that stretch reads QALHATSQQP. Positions 411-442 are disordered; it reads QALHATSQQPLRKDKDKKKVGGWSSIYSVTIP.

This sequence belongs to the TRAFAC class TrmE-Era-EngA-EngB-Septin-like GTPase superfamily. Septin GTPase family. Septins polymerize into heterooligomeric protein complexes that form filaments, and can associate with cellular membranes, actin filaments and microtubules. GTPase activity is required for filament formation. Interacts with SEPTIN7. Interacts with CDK14, SEPTIN4 and SEPTIN5. Interacts with VAMP2; the interaction inhibits interaction of VAMP2 with SYP. Interacts with STX1A. In terms of tissue distribution, expressed in cerebrum, hippocampus and cerebellum (at protein level). Expressed in heart (at protein level).

The protein localises to the cytoplasm. The protein resides in the cytoskeleton. It is found in the synapse. Its subcellular location is the cell projection. It localises to the axon. The protein localises to the cytoplasmic vesicle. The protein resides in the secretory vesicle. It is found in the synaptic vesicle membrane. Its subcellular location is the presynapse. In terms of biological role, filament-forming cytoskeletal GTPase. May play a role in platelet secretion. Seems to participate in the process of SNARE complex formation in synaptic vesicles. The sequence is that of Septin-8 from Rattus norvegicus (Rat).